Consider the following 163-residue polypeptide: Nucleotide-binding protein Acel_0286 (163 aa).

Belongs to the YajQ family.

Nucleotide-binding protein. The protein is Nucleotide-binding protein Acel_0286 of Acidothermus cellulolyticus (strain ATCC 43068 / DSM 8971 / 11B).